The primary structure comprises 1123 residues: Rabphilin-1 (1123 aa).

Basic residues predominate over residues 1–17; the sequence is MTKSTKLRHCKQKKKKP. Disordered regions lie at residues 1–56 and 88–140; these read MTKS…GSRS and SAHN…PSTH. The segment covering 36-46 has biased composition (low complexity); that stretch reads DAATTTSTTDA. Residues 215 to 341 enclose the RabBD domain; sequence KAQTGSITAA…KKSGAWFYKE (127 aa). An FYVE-type zinc finger spans residues 263–328; sequence GNGVTHCLLC…LCKICSEARE (66 aa). Residues Cys-269, Cys-272, Cys-288, Cys-291, Cys-296, Cys-300, Cys-320, and Cys-323 each coordinate Zn(2+). 4 stretches are compositionally biased toward polar residues: residues 365 to 375, 387 to 400, 410 to 428, and 487 to 497; these read PNASSAATPLS, TMPSTSSCQMTTPK, PGLQMNGGPTSPLPNGTRR, and ASSSDGESFVQ. Disordered stretches follow at residues 365-710, 737-779, and 796-818; these read PNAS…VGSA, TSRA…LRTS, and HIVSSEPTSSTTSNQNHTSVPIP. Over residues 531 to 541 the composition is skewed to basic and acidic residues; sequence SRREANMERFS. Residues 563–574 are compositionally biased toward low complexity; it reads ESRPSTRSTSPR. 2 stretches are compositionally biased toward polar residues: residues 605 to 632 and 649 to 666; these read VVQSDHSNPQQSGLTCSSSSLTPLQQQA and PDRTTSRVAQSASGTSLV. A compositionally biased stretch (low complexity) spans 742 to 753; that stretch reads SPLAASSSFLSS. Positions 756–768 are enriched in basic and acidic residues; it reads DDTKQKNRRRDGV. The segment covering 803–818 has biased composition (low complexity); sequence TSSTTSNQNHTSVPIP. C2 domains follow at residues 844–967 and 984–1103; these read SLGS…NLYL and DRGK…RQWI. Ca(2+)-binding residues include Asp-875, Asp-881, Asp-936, Asp-938, Asp-943, Asp-1015, Asp-1021, Asp-1075, Asp-1077, and Asp-1083.

Ca(2+) is required as a cofactor.

The protein localises to the synapse. Rab-3 effector. In Caenorhabditis elegans, this protein is Rabphilin-1 (rbf-1).